The following is a 321-amino-acid chain: uncharacterized protein (321 aa).

The first 22 residues, 1–22 (MKSIYKYTFMLFVFLFGTLMMA), serve as a signal peptide directing secretion.

It belongs to the bacterial solute-binding protein 1 family. WtpA subfamily.

This is an uncharacterized protein from Petrotoga mobilis (strain DSM 10674 / SJ95).